The primary structure comprises 257 residues: MMRADGRSSCELRPVHIHPHYMKHAEGSVLIEVGDTKVICTATVEEKVPSFMRGGGKGWITAEYGMLPRATEQRNVREASKGKVSGRTMEIQRLIGRALRSVVDLEQLGERTIWIDCDVIQADGGTRTASITGAYVALVLALAKLVEEGRLEALPIRDFLAATSVGIDPEHGVILDLDYNEDARAKVDMNVVMTGAGQFVEIQGTGEEAVFSRAELDELLEAAQIGIEQLIAVQRRALGEWAARIGEKKEAAEEDTE.

Phosphate contacts are provided by residues arginine 87 and 125-127 (GTR).

Belongs to the RNase PH family. In terms of assembly, homohexameric ring arranged as a trimer of dimers.

It carries out the reaction tRNA(n+1) + phosphate = tRNA(n) + a ribonucleoside 5'-diphosphate. In terms of biological role, phosphorolytic 3'-5' exoribonuclease that plays an important role in tRNA 3'-end maturation. Removes nucleotide residues following the 3'-CCA terminus of tRNAs; can also add nucleotides to the ends of RNA molecules by using nucleoside diphosphates as substrates, but this may not be physiologically important. Probably plays a role in initiation of 16S rRNA degradation (leading to ribosome degradation) during starvation. This Geobacillus kaustophilus (strain HTA426) protein is Ribonuclease PH.